The sequence spans 50 residues: Tubulin alpha chain (50 aa).

N28 is a binding site for GTP. E40 is a catalytic residue.

It belongs to the tubulin family. Dimer of alpha and beta chains. A typical microtubule is a hollow water-filled tube with an outer diameter of 25 nm and an inner diameter of 15 nM. Alpha-beta heterodimers associate head-to-tail to form protofilaments running lengthwise along the microtubule wall with the beta-tubulin subunit facing the microtubule plus end conferring a structural polarity. Microtubules usually have 13 protofilaments but different protofilament numbers can be found in some organisms and specialized cells. Mg(2+) is required as a cofactor.

Its subcellular location is the cytoplasm. It localises to the cytoskeleton. It carries out the reaction GTP + H2O = GDP + phosphate + H(+). Functionally, tubulin is the major constituent of microtubules, a cylinder consisting of laterally associated linear protofilaments composed of alpha- and beta-tubulin heterodimers. Microtubules grow by the addition of GTP-tubulin dimers to the microtubule end, where a stabilizing cap forms. Below the cap, tubulin dimers are in GDP-bound state, owing to GTPase activity of alpha-tubulin. The chain is Tubulin alpha chain from Populus euphratica (Euphrates poplar).